Consider the following 156-residue polypeptide: Large ribosomal subunit protein uL15 (156 aa).

The segment covering 1 to 16 (MVRRFKRAVKYRRGSR) has biased composition (basic residues). The disordered stretch occupies residues 1–35 (MVRRFKRAVKYRRGSRTHGWGRVGQHRKSGGSGGK).

It belongs to the universal ribosomal protein uL15 family. As to quaternary structure, part of the 50S ribosomal subunit.

In terms of biological role, binds to the 23S rRNA. This Pyrobaculum neutrophilum (strain DSM 2338 / JCM 9278 / NBRC 100436 / V24Sta) (Thermoproteus neutrophilus) protein is Large ribosomal subunit protein uL15.